The primary structure comprises 664 residues: Acetolactate synthase 2, chloroplastic (664 aa).

Positions 1-34 (MAAAAAAPSPSFSKTLSSSSSKSSTLLPRSTFPF) are enriched in low complexity. The interval 1–51 (MAAAAAAPSPSFSKTLSSSSSKSSTLLPRSTFPFPHHPHKTTPPPLHLTPT) is disordered. The transit peptide at 1 to 91 (MAAAAAAPSP…VSRFAPDEPR (91 aa)) directs the protein to the chloroplast. A thiamine diphosphate-binding site is contributed by E138. C158 and C304 are disulfide-bonded. FAD-binding positions include R240, 346–367 (HGTV…FGVR), and 389–408 (DIDS…ICAD). Residues 481 to 561 (QHQMWAAQYY…VKIMLLNNQH (81 aa)) form a thiamine pyrophosphate binding region. Mg(2+) contacts are provided by D532 and N559.

It belongs to the TPP enzyme family. The cofactor is Mg(2+). Thiamine diphosphate serves as cofactor.

It is found in the plastid. Its subcellular location is the chloroplast. It catalyses the reaction 2 pyruvate + H(+) = (2S)-2-acetolactate + CO2. The protein operates within amino-acid biosynthesis; L-isoleucine biosynthesis; L-isoleucine from 2-oxobutanoate: step 1/4. Its pathway is amino-acid biosynthesis; L-valine biosynthesis; L-valine from pyruvate: step 1/4. This is Acetolactate synthase 2, chloroplastic (ALS SURB) from Nicotiana tabacum (Common tobacco).